The sequence spans 112 residues: ATP synthase epsilon chain (112 aa).

It belongs to the ATPase epsilon chain family. F-type ATPases have 2 components, CF(1) - the catalytic core - and CF(0) - the membrane proton channel. CF(1) has five subunits: alpha(3), beta(3), gamma(1), delta(1), epsilon(1). CF(0) has three main subunits: a, b and c.

It localises to the cell membrane. Functionally, produces ATP from ADP in the presence of a proton gradient across the membrane. The sequence is that of ATP synthase epsilon chain from Rickettsia africae (strain ESF-5).